We begin with the raw amino-acid sequence, 372 residues long: Integral membrane protein GPR137B (372 aa).

Residues 1–32 (MESPAWDATKNDSLPPTLTPAVPPYVKLGLTT) are Lumenal-facing. N-linked (GlcNAc...) asparagine glycosylation occurs at asparagine 11. The chain crosses the membrane as a helical span at residues 33–53 (VYTIFYLLLFAFVYVQLWLVL). Topologically, residues 54 to 64 (HYKHKRFSYQT) are cytoplasmic. The helical transmembrane segment at 65-85 (VFLFLCLLWASLRAVLFSFYF) threads the bilayer. The Lumenal portion of the chain corresponds to 86–93 (RNFVEANR). A helical transmembrane segment spans residues 94–114 (LGAFTFWLLYCFPVCLQFFTL). Topologically, residues 115–144 (TLMNLYFARVIYKAKSKYLPELIKYRLPLY) are cytoplasmic. A helical transmembrane segment spans residues 145-165 (LAFLVISLLFLVVNLTCAILV). Residues 166–173 (KTDYAETK) are Lumenal-facing. Residues 174 to 194 (VIVSIRVAINDTLFVLCAVSL) form a helical membrane-spanning segment. Residues 195–222 (SVCLYKISKMSLAGVYLESKGSSVCQVT) lie on the Cytoplasmic side of the membrane. A helical membrane pass occupies residues 223–243 (CIGVTVILLYTSRACYNLVVL). The Lumenal segment spans residues 244–276 (SLSDSRYSSFDYDWYNVSDQADLKCKLGDAGYV). N-linked (GlcNAc...) asparagine glycosylation is present at asparagine 259. The helical transmembrane segment at 277–297 (VFGIILFIWELFPTSLVVYFF) threads the bilayer. Residues 298-372 (RVRNSAQDMT…QTGSLQRDST (75 aa)) are Cytoplasmic-facing.

It belongs to the GPR137 family.

It is found in the lysosome membrane. In terms of biological role, lysosomal integral membrane protein that regulates the localization and activity of mTORC1, a signaling complex promoting cell growth in response to growth factors, energy levels, and amino acids. Interacts with Rag GTPases and increases the lysosomial localization and activity of Rag GTPases and thereby regulates mTORC1 translocation and activity in lysosome. Involved in the regulation of lysosomal morphology and autophagy. Also acts as a negative regulator of osteoclast activity. Its function is as follows. Also acts as a negative regulator of osteoclast activity. The polypeptide is Integral membrane protein GPR137B (gpr137b) (Xenopus laevis (African clawed frog)).